Consider the following 667-residue polypeptide: DNA ligase (667 aa).

NAD(+) is bound by residues Asp32–Asp36, Ser81–Leu82, and Glu110. Lys112 (N6-AMP-lysine intermediate) is an active-site residue. The NAD(+) site is built by Arg133, Glu167, Lys283, and Lys307. Zn(2+) contacts are provided by Cys401, Cys404, Cys419, and Cys424. Residues Glu586 to Ser667 form the BRCT domain.

It belongs to the NAD-dependent DNA ligase family. LigA subfamily. The cofactor is Mg(2+). It depends on Mn(2+) as a cofactor.

The catalysed reaction is NAD(+) + (deoxyribonucleotide)n-3'-hydroxyl + 5'-phospho-(deoxyribonucleotide)m = (deoxyribonucleotide)n+m + AMP + beta-nicotinamide D-nucleotide.. In terms of biological role, DNA ligase that catalyzes the formation of phosphodiester linkages between 5'-phosphoryl and 3'-hydroxyl groups in double-stranded DNA using NAD as a coenzyme and as the energy source for the reaction. It is essential for DNA replication and repair of damaged DNA. The sequence is that of DNA ligase from Staphylococcus aureus (strain USA300).